We begin with the raw amino-acid sequence, 166 residues long: Cyanate hydratase (166 aa).

Residues Arg-92, Glu-95, and Ser-118 contribute to the active site.

This sequence belongs to the cyanase family.

The catalysed reaction is cyanate + hydrogencarbonate + 3 H(+) = NH4(+) + 2 CO2. Functionally, catalyzes the reaction of cyanate with bicarbonate to produce ammonia and carbon dioxide. In Sorghum bicolor (Sorghum), this protein is Cyanate hydratase.